We begin with the raw amino-acid sequence, 135 residues long: Sex-regulated protein janus-A (135 aa).

Lys-37 serves as a coordination point for substrate. His-63 acts as the Proton acceptor in catalysis. 104 to 106 (SQG) is a substrate binding site.

The protein belongs to the janus family.

In terms of biological role, janA and janB regulate somatic sex differentiation. The polypeptide is Sex-regulated protein janus-A (janA) (Drosophila simulans (Fruit fly)).